The following is a 122-amino-acid chain: Large ribosomal subunit protein uL14 (122 aa).

The protein belongs to the universal ribosomal protein uL14 family. As to quaternary structure, part of the 50S ribosomal subunit. Forms a cluster with proteins L3 and L19. In the 70S ribosome, L14 and L19 interact and together make contacts with the 16S rRNA in bridges B5 and B8.

Functionally, binds to 23S rRNA. Forms part of two intersubunit bridges in the 70S ribosome. The chain is Large ribosomal subunit protein uL14 from Bacillus anthracis (strain A0248).